Reading from the N-terminus, the 328-residue chain is Interleukin-12 subunit beta (328 aa).

A signal peptide spans 1–22 (MCHQQLVISWFSLVFLASPLVA). The Ig-like C2-type domain occupies 23 to 106 (IWELKKDVYV…LSHSLLLLHK (84 aa)). Cystine bridges form between Cys-50-Cys-90, Cys-131-Cys-142, and Cys-170-Cys-193. An N-linked (GlcNAc...) asparagine glycan is attached at Asn-135. Asn-222 carries an N-linked (GlcNAc...) asparagine glycan. The Fibronectin type-III domain occupies 237–328 (PPKNLQLKPL…WSEWASVPCS (92 aa)). A disulfide bond links Cys-300 and Cys-327. Trp-319 carries C-linked (Man) tryptophan glycosylation.

Belongs to the IL-12B family. As to quaternary structure, heterodimer with IL12A; disulfide-linked. The heterodimer is known as interleukin IL-12. Heterodimer with IL23A; disulfide-linked. The heterodimer is known as interleukin IL-23. Also secreted as a monomer. Interacts with NBR1; this interaction promotes IL-12 secretion. In terms of processing, known to be C-mannosylated in the recombinant protein; it is not yet known for sure if the wild-type protein is also modified.

Its subcellular location is the secreted. Its function is as follows. Cytokine that can act as a growth factor for activated T and NK cells, enhance the lytic activity of NK/lymphokine-activated killer cells, and stimulate the production of IFN-gamma by resting PBMC. In terms of biological role, associates with IL23A to form the IL-23 interleukin, a heterodimeric cytokine which functions in innate and adaptive immunity. IL-23 may constitute with IL-17 an acute response to infection in peripheral tissues. IL-23 binds to a heterodimeric receptor complex composed of IL12RB1 and IL23R, activates the Jak-Stat signaling cascade, stimulates memory rather than naive T-cells and promotes production of pro-inflammatory cytokines. IL-23 induces autoimmune inflammation and thus may be responsible for autoimmune inflammatory diseases and may be important for tumorigenesis. This is Interleukin-12 subunit beta (IL12B) from Homo sapiens (Human).